A 405-amino-acid chain; its full sequence is POC1 centriolar protein homolog A (405 aa).

7 WD repeats span residues 17–56, 59–98, 101–140, 143–182, 185–224, 227–266, and 269–308; these read GHRDAVTCVDFSLNTKHLASGSMDSTLMIWHMKPQSRAYR, GHKDAVTCVNFSPSGHLLASGSRDKTVRIWVPNVKGESTV, AHTATVRSVHFCSDGQSLVTASDDKTVKVWSTHRQRFLFS, QHINWVRCAKFSPDGRLIVSASDDKTVKLWDKTSRECIHS, EHGGFVTYVDFHPSGTCIAAAGMDNTVKVWDARTHRLLQH, LHSAAVNALSFHPSGNYLITASSDSTLKILDLMEGRLLYT, and GHQGPATTVAFSRTGEYFASGGSDEQVMVWKSNFDIVDYG. A disordered region spans residues 313–352; it reads RRPPPLTSSSGTLPKMDLPVPPGRDRSLESVQGEPQESIS. Positions 341-352 are enriched in polar residues; that stretch reads ESVQGEPQESIS. Positions 367–395 form a coiled coil; sequence QLDILTQTVSILEQRLTLTEDRLKQCLEN.

This sequence belongs to the WD repeat POC1 family. Interacts with POC1B. As to expression, widely expressed in embryonic and adult tissues.

The protein resides in the cytoplasm. It localises to the cytoskeleton. It is found in the microtubule organizing center. The protein localises to the centrosome. Its subcellular location is the centriole. The protein resides in the cilium basal body. It localises to the spindle pole. Plays an important role in centriole assembly and/or stability and ciliogenesis. Involved in early steps of centriole duplication, as well as in the later steps of centriole length control. Acts in concert with POC1B to ensure centriole integrity and proper mitotic spindle formation. The chain is POC1 centriolar protein homolog A (Poc1a) from Mus musculus (Mouse).